The following is a 274-amino-acid chain: Probable glycerophosphodiester phosphodiesterase 1 (274 aa).

Positions 12–264 (PFVVAHRGAS…HHPGRTKAWL (253 aa)) constitute a GP-PDE domain. The Proton acceptor role is filled by His-17. Glu-44 and Asp-46 together coordinate Ca(2+). His-59 acts as the Proton donor in catalysis. Glu-126 is a binding site for Ca(2+).

Belongs to the glycerophosphoryl diester phosphodiesterase family. The cofactor is Ca(2+).

It carries out the reaction a sn-glycero-3-phosphodiester + H2O = an alcohol + sn-glycerol 3-phosphate + H(+). Glycerophosphodiester phosphodiesterase hydrolyzes glycerophosphodiesters into glycerol-3-phosphate (G3P) and the corresponding alcohol. The sequence is that of Probable glycerophosphodiester phosphodiesterase 1 (glpQ1) from Mycobacterium tuberculosis (strain CDC 1551 / Oshkosh).